A 374-amino-acid polypeptide reads, in one-letter code: Chaperone protein DnaJ (374 aa).

Residues Asp3 to Gly67 form the J domain. A disordered region spans residues Gly99–Leu118. The segment covering Gln103–Gly115 has biased composition (low complexity). The CR-type zinc finger occupies Gly132 to Arg214. Positions 145, 148, 162, 165, 188, 191, 202, and 205 each coordinate Zn(2+). CXXCXGXG motif repeat units follow at residues Cys145–Gly152, Cys162–Gly169, Cys188–Gly195, and Cys202–Gly209.

The protein belongs to the DnaJ family. As to quaternary structure, homodimer. The cofactor is Zn(2+).

It localises to the cytoplasm. Functionally, participates actively in the response to hyperosmotic and heat shock by preventing the aggregation of stress-denatured proteins and by disaggregating proteins, also in an autonomous, DnaK-independent fashion. Unfolded proteins bind initially to DnaJ; upon interaction with the DnaJ-bound protein, DnaK hydrolyzes its bound ATP, resulting in the formation of a stable complex. GrpE releases ADP from DnaK; ATP binding to DnaK triggers the release of the substrate protein, thus completing the reaction cycle. Several rounds of ATP-dependent interactions between DnaJ, DnaK and GrpE are required for fully efficient folding. Also involved, together with DnaK and GrpE, in the DNA replication of plasmids through activation of initiation proteins. This is Chaperone protein DnaJ from Prochlorococcus marinus subsp. pastoris (strain CCMP1986 / NIES-2087 / MED4).